A 198-amino-acid polypeptide reads, in one-letter code: Ribonuclease HII (198 aa).

The RNase H type-2 domain occupies 6–198 (EQIAGVDEVG…APCQASLLPD (193 aa)). Residues Asp12, Glu13, and Asp108 each coordinate a divalent metal cation.

The protein belongs to the RNase HII family. Mn(2+) is required as a cofactor. Mg(2+) serves as cofactor.

The protein resides in the cytoplasm. The enzyme catalyses Endonucleolytic cleavage to 5'-phosphomonoester.. In terms of biological role, endonuclease that specifically degrades the RNA of RNA-DNA hybrids. This is Ribonuclease HII from Acaryochloris marina (strain MBIC 11017).